A 275-amino-acid polypeptide reads, in one-letter code: MLPTAIVLTILLGIIAYIWGYPHWLDWREKQLFQRPLPPHWQAILGDRLPFYAQLSPQQRQKLEAKIQLFLQQKQFIGCNDFVLTDEVRLVIAAQACYLALELGSNPYPRLDTILVYPDAFQVRQITSPDGYVVEEEDTVRAGESWDRAGQLILAWGTIAWDLERWQDGHNVIFHEFAHQLDMGDGAMNGVPKLGRRNDYQRWQSIFASEYQQLLSQLENNLPTVIDPYGATNPCEFFAVVTETFFEKGQELQHNHGQLYQVLRKYYCLEPLINC.

This sequence belongs to the MtfA family.

This is an uncharacterized protein from Synechocystis sp. (strain ATCC 27184 / PCC 6803 / Kazusa).